Here is a 495-residue protein sequence, read N- to C-terminus: Probable cytosol aminopeptidase (495 aa).

Residues Lys266 and Asp271 each coordinate Mn(2+). Lys278 is an active-site residue. The Mn(2+) site is built by Asp289, Asp348, and Glu350. The active site involves Arg352.

Belongs to the peptidase M17 family. Mn(2+) serves as cofactor.

Its subcellular location is the cytoplasm. It carries out the reaction Release of an N-terminal amino acid, Xaa-|-Yaa-, in which Xaa is preferably Leu, but may be other amino acids including Pro although not Arg or Lys, and Yaa may be Pro. Amino acid amides and methyl esters are also readily hydrolyzed, but rates on arylamides are exceedingly low.. It catalyses the reaction Release of an N-terminal amino acid, preferentially leucine, but not glutamic or aspartic acids.. In terms of biological role, presumably involved in the processing and regular turnover of intracellular proteins. Catalyzes the removal of unsubstituted N-terminal amino acids from various peptides. The chain is Probable cytosol aminopeptidase from Pseudomonas aeruginosa (strain LESB58).